Consider the following 209-residue polypeptide: Cilia- and flagella-associated protein 418 (209 aa).

Residues M1–D76 are required for interaction with FAM161A. The interval L24–F58 is disordered. Residues S40–F58 are compositionally biased toward basic and acidic residues.

Interacts (via N-terminus) with FAM161A (via central region); the interaction is direct. As to expression, expressed in multiple tissues, including the brain, kidney, lung, spleen, heart, trachea and testis. Expressed in the retina (at protein level).

Its subcellular location is the cytoplasm. The protein localises to the photoreceptor inner segment. May be involved in photoreceptor outer segment disk morphogenesis. The chain is Cilia- and flagella-associated protein 418 from Mus musculus (Mouse).